The following is a 115-amino-acid chain: T cell receptor beta variable 11-2 (115 aa).

Residues M1–A21 form the signal peptide. The Ig-like domain maps to G22–L115. The cysteines at positions 42 and 111 are disulfide-linked.

As to quaternary structure, alpha-beta TR is a heterodimer composed of an alpha and beta chain; disulfide-linked. The alpha-beta TR is associated with the transmembrane signaling CD3 coreceptor proteins to form the TR-CD3 (TcR or TCR). The assembly of alpha-beta TR heterodimers with CD3 occurs in the endoplasmic reticulum where a single alpha-beta TR heterodimer associates with one CD3D-CD3E heterodimer, one CD3G-CD3E heterodimer and one CD247 homodimer forming a stable octameric structure. CD3D-CD3E and CD3G-CD3E heterodimers preferentially associate with TR alpha and TR beta chains, respectively. The association of the CD247 homodimer is the last step of TcR assembly in the endoplasmic reticulum and is required for transport to the cell surface.

The protein resides in the cell membrane. Its function is as follows. V region of the variable domain of T cell receptor (TR) beta chain that participates in the antigen recognition. Alpha-beta T cell receptors are antigen specific receptors which are essential to the immune response and are present on the cell surface of T lymphocytes. Recognize peptide-major histocompatibility (MH) (pMH) complexes that are displayed by antigen presenting cells (APC), a prerequisite for efficient T cell adaptive immunity against pathogens. Binding of alpha-beta TR to pMH complex initiates TR-CD3 clustering on the cell surface and intracellular activation of LCK that phosphorylates the ITAM motifs of CD3G, CD3D, CD3E and CD247 enabling the recruitment of ZAP70. In turn ZAP70 phosphorylates LAT, which recruits numerous signaling molecules to form the LAT signalosome. The LAT signalosome propagates signal branching to three major signaling pathways, the calcium, the mitogen-activated protein kinase (MAPK) kinase and the nuclear factor NF-kappa-B (NF-kB) pathways, leading to the mobilization of transcription factors that are critical for gene expression and essential for T cell growth and differentiation. The T cell repertoire is generated in the thymus, by V-(D)-J rearrangement. This repertoire is then shaped by intrathymic selection events to generate a peripheral T cell pool of self-MH restricted, non-autoaggressive T cells. Post-thymic interaction of alpha-beta TR with the pMH complexes shapes TR structural and functional avidity. This Homo sapiens (Human) protein is T cell receptor beta variable 11-2.